Consider the following 180-residue polypeptide: ATP-dependent protease subunit HslV (180 aa).

Residue threonine 7 is part of the active site. 3 residues coordinate Na(+): glycine 165, cysteine 168, and threonine 171.

Belongs to the peptidase T1B family. HslV subfamily. In terms of assembly, a double ring-shaped homohexamer of HslV is capped on each side by a ring-shaped HslU homohexamer. The assembly of the HslU/HslV complex is dependent on binding of ATP.

Its subcellular location is the cytoplasm. It catalyses the reaction ATP-dependent cleavage of peptide bonds with broad specificity.. Its activity is regulated as follows. Allosterically activated by HslU binding. Protease subunit of a proteasome-like degradation complex believed to be a general protein degrading machinery. This Bacillus cereus (strain G9842) protein is ATP-dependent protease subunit HslV.